The primary structure comprises 435 residues: Angio-associated migratory cell protein (435 aa).

The disordered stretch occupies residues 1 to 65 (MESESESGAA…EEEEEGNEEG (65 aa)). Ser-20 bears the Phosphoserine mark. A compositionally biased stretch (acidic residues) spans 39–63 (DPDDLAQEMEDVDFEEEEEEEEGNE). WD repeat units lie at residues 90–130 (LHSA…LLFE), 133–172 (GHKDSVTCAGFSHDSTLVATGDMSGLLKVWQVDTKEEVWS), 174–213 (EAGDLEWMEWHPRAPVLLAGTADGNTWMWKVPNGDCKTFQ), 215–255 (PNCP…HVLK), 259–300 (GHQG…GVFR), 316–355 (SESNSVESLGFCSVMPLAAVGYLDGTLAIYDLSTQTLRHQ), 357–396 (QHQSGIVQLLWEAGTAVVYTCSLDGIVRLWDARTGRLLTD), and 399–434 (GHTAEILDFALSKDASLVVTTSGDHKAKVFCVQRPD).

The protein localises to the cell membrane. The protein resides in the cytoplasm. Plays a role in angiogenesis and cell migration. In smooth muscle cell migration, may act through the RhoA pathway. In Canis lupus familiaris (Dog), this protein is Angio-associated migratory cell protein (AAMP).